The sequence spans 151 residues: Transcriptional regulator MraZ (151 aa).

SpoVT-AbrB domains are found at residues 5–56 and 85–128; these read THRH…PLPT and SEEL…DAAR.

The protein belongs to the MraZ family. As to quaternary structure, forms oligomers.

It localises to the cytoplasm. It is found in the nucleoid. The chain is Transcriptional regulator MraZ from Acidithiobacillus ferrooxidans (strain ATCC 23270 / DSM 14882 / CIP 104768 / NCIMB 8455) (Ferrobacillus ferrooxidans (strain ATCC 23270)).